The following is a 221-amino-acid chain: Sigma non-opioid intracellular receptor 1 (221 aa).

The Lumenal segment spans residues 1-4; it reads MALW. Residues 5 to 27 form a helical membrane-spanning segment; sequence RGLRAVLAVAGLAVAVQLLRGWL. The Cytoplasmic portion of the chain corresponds to 28 to 221; it reads GSKSYVFNRE…STHLSELGFF (194 aa). The tract at residues 96-103 is important for ligand-binding; sequence SLTEYVLL. The interval 174 to 221 is C-terminal hydrophobic region; the sequence is FIPSTLGFALADTIFSTQDFLTLFYTVKVYGKALLLETSTHLSELGFF.

Belongs to the ERG2 family. In terms of assembly, homotrimer.

It is found in the nucleus inner membrane. It localises to the nucleus outer membrane. Its subcellular location is the nucleus envelope. The protein resides in the cytoplasmic vesicle. The protein localises to the endoplasmic reticulum membrane. It is found in the membrane. May function in lipid transport from the endoplasmic reticulum and be involved in a wide array of cellular functions probably through regulation of the biogenesis of lipid microdomains at the plasma membrane. May regulate calcium efflux at the endoplasmic reticulum. The protein is Sigma non-opioid intracellular receptor 1 (sigmar1) of Xenopus tropicalis (Western clawed frog).